We begin with the raw amino-acid sequence, 45 residues long: Large ribosomal subunit protein bL34 (45 aa).

The segment at 1 to 24 (MTKRTFGGTSRKRKRVSGFRVRMR) is disordered. The span at 10–24 (SRKRKRVSGFRVRMR) shows a compositional bias: basic residues.

Belongs to the bacterial ribosomal protein bL34 family.

In Prochlorococcus marinus (strain MIT 9303), this protein is Large ribosomal subunit protein bL34.